The chain runs to 95 residues: Putative defensin-like protein 252 (95 aa).

An N-terminal signal peptide occupies residues 1–27 (MRCVTSFVVLCILMFLVVNNVKVDVKA). Intrachain disulfides connect C34–C93, C45–C72, C56–C85, and C70–C87.

This sequence belongs to the DEFL family.

It is found in the secreted. The chain is Putative defensin-like protein 252 (SCRL13) from Arabidopsis thaliana (Mouse-ear cress).